A 427-amino-acid chain; its full sequence is MESLTLQPIARVDGTINLPGSKSVSNRALLLAALAHGKTVLTNLLDSDDVRHMLNALTALGLSYTLSADRTRCEIIGNGGPLHAEGALELFLGNAGTAMRPLAAALCLDSNDIVLTGEPRMKERPIGHLVDALRLGGAKITYLEQENYPPLRLQGGFTGGNVDVDGSVSSQFLTALLMTAPLAPEDTVIRIKGDLVSKPYIDITLNLMKTFGVEIENQHYQQFVVKGGQSYQSPGTYLVEGDASSASYFLAAAAIKGGTVKVTGIGRNSMQGDIRFADVLEKMGATICWGDDYISCTRGELNAIDMDMNHIPDAAMTIATAALFAKGTTTLRNIYNWRVKETDRLFAMATELRKVGAEVEEGHDYIRITPPEKLNFAEIATYNDHRMAMCFSLVALSDTPVTILDPKCTAKTFPDYFEQLARISQAA.

3-phosphoshikimate-binding residues include Lys22, Ser23, and Arg27. Lys22 provides a ligand contact to phosphoenolpyruvate. Phosphoenolpyruvate-binding residues include Gly96 and Arg124. 3-phosphoshikimate is bound by residues Ser169, Ser170, Gln171, Ser197, Asp313, Asn336, and Lys340. Gln171 provides a ligand contact to phosphoenolpyruvate. Asp313 functions as the Proton acceptor in the catalytic mechanism. Phosphoenolpyruvate-binding residues include Arg344, Arg386, and Lys411.

This sequence belongs to the EPSP synthase family. In terms of assembly, monomer.

The protein localises to the cytoplasm. The catalysed reaction is 3-phosphoshikimate + phosphoenolpyruvate = 5-O-(1-carboxyvinyl)-3-phosphoshikimate + phosphate. It functions in the pathway metabolic intermediate biosynthesis; chorismate biosynthesis; chorismate from D-erythrose 4-phosphate and phosphoenolpyruvate: step 6/7. In terms of biological role, catalyzes the transfer of the enolpyruvyl moiety of phosphoenolpyruvate (PEP) to the 5-hydroxyl of shikimate-3-phosphate (S3P) to produce enolpyruvyl shikimate-3-phosphate and inorganic phosphate. The polypeptide is 3-phosphoshikimate 1-carboxyvinyltransferase (Shigella flexneri serotype 5b (strain 8401)).